The following is a 583-amino-acid chain: Propane 2-monooxygenase operon transcriptional activator MimR (583 aa).

In terms of domain architecture, Sigma-54 factor interaction spans 320–513 (LAGQSSSFRR…LRHVLTETVR (194 aa)). Residues 349–356 (ERGSGRTY) and 395–404 (SADFAVIVSD) each bind ATP.

Its function is as follows. Acts as a transcriptional activator of the mimABCD operon encoding the propane 2-monooxygenase complex. This chain is Propane 2-monooxygenase operon transcriptional activator MimR, found in Mycolicibacterium smegmatis (strain ATCC 700084 / mc(2)155) (Mycobacterium smegmatis).